Here is a 565-residue protein sequence, read N- to C-terminus: uncharacterized protein (565 aa).

Residues 1 to 19 (MRWLATFVALLIAISSVSA) form the signal peptide. The span at 494–504 (TGAENVTNNSV) shows a compositional bias: polar residues. A disordered region spans residues 494-525 (TGAENVTNNSVTATTPPAKASQQTPAPATPPV). Positions 505–519 (TATTPPAKASQQTPA) are enriched in low complexity.

This is an uncharacterized protein from Archaeoglobus fulgidus (strain ATCC 49558 / DSM 4304 / JCM 9628 / NBRC 100126 / VC-16).